Here is a 295-residue protein sequence, read N- to C-terminus: Shikimate dehydrogenase (NADP(+)) (295 aa).

Shikimate-binding positions include 18–20 and Thr-66; that span reads SRS. The Proton acceptor role is filled by Lys-70. The shikimate site is built by Asn-91 and Asp-106. NADP(+) contacts are provided by residues 130-134 and Met-235; that span reads GNGGA. Tyr-237 provides a ligand contact to shikimate. Residue Gly-258 coordinates NADP(+).

Belongs to the shikimate dehydrogenase family. Homodimer.

The enzyme catalyses shikimate + NADP(+) = 3-dehydroshikimate + NADPH + H(+). The protein operates within metabolic intermediate biosynthesis; chorismate biosynthesis; chorismate from D-erythrose 4-phosphate and phosphoenolpyruvate: step 4/7. Its function is as follows. Involved in the biosynthesis of the chorismate, which leads to the biosynthesis of aromatic amino acids. Catalyzes the reversible NADPH linked reduction of 3-dehydroshikimate (DHSA) to yield shikimate (SA). The polypeptide is Shikimate dehydrogenase (NADP(+)) (Chlorobium phaeobacteroides (strain DSM 266 / SMG 266 / 2430)).